The following is a 315-amino-acid chain: Probable integrase/recombinase aq_aa09 (315 aa).

The 78-residue stretch at 1 to 78 (MEHFIDTYLY…EVRLFYEWLQ (78 aa)) folds into the Core-binding (CB) domain. Residues 106 to 313 (SKKKYYSDDE…REKQLEAILE (208 aa)) form the Tyr recombinase domain. Active-site residues include R150, K186, H263, R266, and H289. Y299 functions as the O-(3'-phospho-DNA)-tyrosine intermediate in the catalytic mechanism.

This sequence belongs to the 'phage' integrase family.

In terms of biological role, may function as an integrase. This is Probable integrase/recombinase aq_aa09 from Aquifex aeolicus (strain VF5).